The primary structure comprises 222 residues: GTP cyclohydrolase 1 (222 aa).

C111, H114, and C182 together coordinate Zn(2+).

Belongs to the GTP cyclohydrolase I family. In terms of assembly, toroid-shaped homodecamer, composed of two pentamers of five dimers.

It catalyses the reaction GTP + H2O = 7,8-dihydroneopterin 3'-triphosphate + formate + H(+). It functions in the pathway cofactor biosynthesis; 7,8-dihydroneopterin triphosphate biosynthesis; 7,8-dihydroneopterin triphosphate from GTP: step 1/1. With respect to regulation, allosteric enzyme. Activity is modulated by K(+), divalent cations, UTP, and tetrahydrobiopterin. Tetrahydrobiopterin is an inhibitor of this enzyme. This is GTP cyclohydrolase 1 from Salmonella typhi.